Reading from the N-terminus, the 582-residue chain is Arginine--tRNA ligase (582 aa).

The 'HIGH' region motif lies at 127–137 (PNLAKEMHVGH).

This sequence belongs to the class-I aminoacyl-tRNA synthetase family. Monomer.

It is found in the cytoplasm. The enzyme catalyses tRNA(Arg) + L-arginine + ATP = L-arginyl-tRNA(Arg) + AMP + diphosphate. The sequence is that of Arginine--tRNA ligase from Psychromonas ingrahamii (strain DSM 17664 / CCUG 51855 / 37).